A 208-amino-acid polypeptide reads, in one-letter code: Uracil phosphoribosyltransferase (208 aa).

Residues Arg77, Arg102, and 128-136 (DPMLATGGT) each bind 5-phospho-alpha-D-ribose 1-diphosphate. Uracil-binding positions include Ile191 and 196–198 (GDI). Asp197 is a binding site for 5-phospho-alpha-D-ribose 1-diphosphate.

This sequence belongs to the UPRTase family. It depends on Mg(2+) as a cofactor.

It catalyses the reaction UMP + diphosphate = 5-phospho-alpha-D-ribose 1-diphosphate + uracil. It participates in pyrimidine metabolism; UMP biosynthesis via salvage pathway; UMP from uracil: step 1/1. With respect to regulation, allosterically activated by GTP. Its function is as follows. Catalyzes the conversion of uracil and 5-phospho-alpha-D-ribose 1-diphosphate (PRPP) to UMP and diphosphate. This is Uracil phosphoribosyltransferase from Aquifex aeolicus (strain VF5).